We begin with the raw amino-acid sequence, 321 residues long: ATP-dependent 6-phosphofructokinase (321 aa).

Gly-12 serves as a coordination point for ATP. An ADP-binding site is contributed by 22-26 (RGVVR). ATP contacts are provided by residues 73 to 74 (RF) and 103 to 106 (GDGS). Residue Asp-104 coordinates Mg(2+). 127 to 129 (TID) lines the substrate pocket. Asp-129 (proton acceptor) is an active-site residue. Arg-156 contacts ADP. Residues Arg-164 and 171–173 (MGR) contribute to the substrate site. Residues 187 to 189 (GCE), Lys-213, and 215 to 217 (KRH) contribute to the ADP site. Substrate is bound by residues Glu-224, Arg-245, and 251-254 (HTQR).

This sequence belongs to the phosphofructokinase type A (PFKA) family. ATP-dependent PFK group I subfamily. Prokaryotic clade 'B1' sub-subfamily. Homotetramer. Requires Mg(2+) as cofactor.

The protein resides in the cytoplasm. It catalyses the reaction beta-D-fructose 6-phosphate + ATP = beta-D-fructose 1,6-bisphosphate + ADP + H(+). It participates in carbohydrate degradation; glycolysis; D-glyceraldehyde 3-phosphate and glycerone phosphate from D-glucose: step 3/4. With respect to regulation, allosterically activated by ADP and other diphosphonucleosides, and allosterically inhibited by phosphoenolpyruvate. Functionally, catalyzes the phosphorylation of D-fructose 6-phosphate to fructose 1,6-bisphosphate by ATP, the first committing step of glycolysis. The sequence is that of ATP-dependent 6-phosphofructokinase from Glaesserella parasuis serovar 5 (strain SH0165) (Haemophilus parasuis).